A 391-amino-acid polypeptide reads, in one-letter code: Ribonuclease 3-like protein 2 (391 aa).

Residues 7-26 (PEYNFPAITRCSLSNSLPHR) carry the Nuclear export signal motif. Residues 60 to 203 (MEAVEKILNY…LAGAVYVDVN (144 aa)) form the RNase III domain. Residues Glu-96, Asp-189, and Glu-192 each coordinate Mg(2+). DRBM domains are found at residues 218–294 (EPIV…KLSE) and 313–387 (HAKT…ALRK). Cys-240 and Cys-322 are oxidised to a cystine. The Bipartite nuclear localization motif lies at 371 to 387 (KKAESSSAYHMIRALRK).

In terms of assembly, homodimer; disulfide-linked. Mg(2+) serves as cofactor. Mn(2+) is required as a cofactor. As to expression, expressed in seeds, leaves and flower buds.

It localises to the nucleus. The protein resides in the cytoplasm. Its function is as follows. Ribonuclease that cleaves double-stranded RNA (dsRNA). Required for 3'-external transcribed spacer (ETS) cleavage of the pre-rRNA precursors. May promote the production of 21 nucleotide small interfering RNA (siRNA) during post-transcriptional gene silencing (PTGS). This is Ribonuclease 3-like protein 2 (RTL2) from Arabidopsis thaliana (Mouse-ear cress).